The chain runs to 432 residues: Putative cyclin-F1-4 (432 aa).

Belongs to the cyclin family. Cyclin F subfamily.

This Oryza sativa subsp. japonica (Rice) protein is Putative cyclin-F1-4 (CycF1-4).